The sequence spans 180 residues: Large ribosomal subunit protein uL5c (180 aa).

It belongs to the universal ribosomal protein uL5 family. In terms of assembly, part of the 50S ribosomal subunit; contacts the 5S rRNA.

It is found in the plastid. It localises to the chloroplast. In terms of biological role, binds 5S rRNA, forms part of the central protuberance of the 50S subunit. The sequence is that of Large ribosomal subunit protein uL5c (rpl5) from Oltmannsiellopsis viridis (Marine flagellate).